A 598-amino-acid polypeptide reads, in one-letter code: Proline--tRNA ligase (598 aa).

This sequence belongs to the class-II aminoacyl-tRNA synthetase family. ProS type 1 subfamily. Homodimer.

It localises to the cytoplasm. The catalysed reaction is tRNA(Pro) + L-proline + ATP = L-prolyl-tRNA(Pro) + AMP + diphosphate. Its function is as follows. Catalyzes the attachment of proline to tRNA(Pro) in a two-step reaction: proline is first activated by ATP to form Pro-AMP and then transferred to the acceptor end of tRNA(Pro). As ProRS can inadvertently accommodate and process non-cognate amino acids such as alanine and cysteine, to avoid such errors it has two additional distinct editing activities against alanine. One activity is designated as 'pretransfer' editing and involves the tRNA(Pro)-independent hydrolysis of activated Ala-AMP. The other activity is designated 'posttransfer' editing and involves deacylation of mischarged Ala-tRNA(Pro). The misacylated Cys-tRNA(Pro) is not edited by ProRS. This chain is Proline--tRNA ligase, found in Rippkaea orientalis (strain PCC 8801 / RF-1) (Cyanothece sp. (strain PCC 8801)).